Reading from the N-terminus, the 246-residue chain is Small ribosomal subunit protein uS2 (246 aa).

A disordered region spans residues 224–246; that stretch reads AKQGEESAETEAKEAETTETTTA. Over residues 225-239 the composition is skewed to basic and acidic residues; it reads KQGEESAETEAKEAE.

This sequence belongs to the universal ribosomal protein uS2 family.

The sequence is that of Small ribosomal subunit protein uS2 from Bacillus licheniformis (strain ATCC 14580 / DSM 13 / JCM 2505 / CCUG 7422 / NBRC 12200 / NCIMB 9375 / NCTC 10341 / NRRL NRS-1264 / Gibson 46).